Consider the following 444-residue polypeptide: uncharacterized protein (444 aa).

12 helical membrane-spanning segments follow: residues 2-22 (PILI…KVKL), 24-44 (TFVS…MDIN), 52-72 (TGIG…AMLG), 106-126 (FIIG…PIVY), 134-154 (MPFL…HGFL), 174-194 (VLLF…PLFN), 228-248 (FAIS…ATIF), 261-281 (IIEF…LALY), 305-325 (IAMM…LIDG), 343-363 (LFVA…ATVA), 377-397 (AGSV…VIAC), and 424-444 (LLTT…GLVM).

This sequence belongs to the GntP permease family.

The protein resides in the cell membrane. This is an uncharacterized protein from Bacillus subtilis (strain 168).